The following is a 614-amino-acid chain: Sulfite reductase [NADPH] flavoprotein alpha-component (614 aa).

One can recognise a Flavodoxin-like domain in the interval 79 to 217 (LTIIFASQTG…AATEWRKQVL (139 aa)). FMN contacts are provided by residues 85–90 (SQTGNA), 132–135 (STNG), and 168–177 (LGDSSYQFFC). Residues 249-463 (EQPYTASLST…VEHNNNFKLP (215 aa)) form the FAD-binding FR-type domain. FAD is bound by residues threonine 337, threonine 371, 401 to 404 (RLYS), 419 to 421 (TVG), tyrosine 425, and 434 to 437 (GGAS). Residues 534-535 (SR), 540-544 (KVYVQ), and aspartate 576 contribute to the NADP(+) site. Tyrosine 614 provides a ligand contact to FAD.

Belongs to the NADPH-dependent sulphite reductase flavoprotein subunit CysJ family. The protein in the N-terminal section; belongs to the flavodoxin family. This sequence in the C-terminal section; belongs to the flavoprotein pyridine nucleotide cytochrome reductase family. As to quaternary structure, alpha(8)-beta(8). The alpha component is a flavoprotein, the beta component is a hemoprotein. FAD is required as a cofactor. FMN serves as cofactor.

The catalysed reaction is hydrogen sulfide + 3 NADP(+) + 3 H2O = sulfite + 3 NADPH + 4 H(+). It participates in sulfur metabolism; hydrogen sulfide biosynthesis; hydrogen sulfide from sulfite (NADPH route): step 1/1. Its function is as follows. Component of the sulfite reductase complex that catalyzes the 6-electron reduction of sulfite to sulfide. This is one of several activities required for the biosynthesis of L-cysteine from sulfate. The flavoprotein component catalyzes the electron flow from NADPH -&gt; FAD -&gt; FMN to the hemoprotein component. This is Sulfite reductase [NADPH] flavoprotein alpha-component from Vibrio cholerae serotype O1 (strain ATCC 39315 / El Tor Inaba N16961).